A 108-amino-acid polypeptide reads, in one-letter code: Parvalbumin beta 2 (108 aa).

Alanine 1 carries the N-acetylalanine modification. EF-hand domains are found at residues 38-73 (KSAADIKKVFGIIDQDKSDFVEEDELKLFLQNFSAG) and 77-108 (LTDAETATFLKAGDSDGDGKIGVDEFAAMVKG). Positions 51, 53, 55, 57, 59, 62, 90, 92, 94, 96, and 101 each coordinate Ca(2+).

It belongs to the parvalbumin family.

Functionally, in muscle, parvalbumin is thought to be involved in relaxation after contraction. It binds two calcium ions. The polypeptide is Parvalbumin beta 2 (Merluccius bilinearis (Silver hake)).